Here is a 202-residue protein sequence, read N- to C-terminus: Protein G1-like4 (202 aa).

2 disordered regions span residues 1–44 and 158–202; these read MDLS…RYEA and RARG…GAAC. The segment covering 12–22 has biased composition (gly residues); that stretch reads SGGGNGGGGGS. Residues 23–36 are compositionally biased toward low complexity; that stretch reads SSSNSSPSMGAGAP. Residues 41 to 168 form the ALOG domain; sequence RYEAQKRRDW…ARGVSYEKKK (128 aa). Residues 166-170 carry the Nuclear localization signal motif; sequence KKKRK. Residues 173-186 show a composition bias toward low complexity; that stretch reads QQQQLQGGDSSGLH. Residues 192-202 are compositionally biased toward pro residues; the sequence is PPPPPPAGAAC.

The protein belongs to the plant homeotic and developmental regulators ALOG protein family.

It is found in the nucleus. Functionally, probable transcription regulator that acts as a developmental regulator by promoting cell growth in response to light. This chain is Protein G1-like4, found in Oryza sativa subsp. indica (Rice).